The sequence spans 222 residues: Putative N-acetylmannosamine-6-phosphate 2-epimerase (222 aa).

It belongs to the NanE family.

It carries out the reaction an N-acyl-D-glucosamine 6-phosphate = an N-acyl-D-mannosamine 6-phosphate. It participates in amino-sugar metabolism; N-acetylneuraminate degradation; D-fructose 6-phosphate from N-acetylneuraminate: step 3/5. Converts N-acetylmannosamine-6-phosphate (ManNAc-6-P) to N-acetylglucosamine-6-phosphate (GlcNAc-6-P). This Oceanobacillus iheyensis (strain DSM 14371 / CIP 107618 / JCM 11309 / KCTC 3954 / HTE831) protein is Putative N-acetylmannosamine-6-phosphate 2-epimerase.